Here is a 149-residue protein sequence, read N- to C-terminus: Large ribosomal subunit protein bL9 (149 aa).

The protein belongs to the bacterial ribosomal protein bL9 family.

In terms of biological role, binds to the 23S rRNA. The polypeptide is Large ribosomal subunit protein bL9 (Vibrio cholerae serotype O1 (strain ATCC 39541 / Classical Ogawa 395 / O395)).